The following is a 230-amino-acid chain: UPF0500 protein C1orf216 homolog (230 aa).

The segment at Met1–Ser103 is disordered. The span at Arg60–Gln73 shows a compositional bias: polar residues. A compositionally biased stretch (low complexity) spans Pro85 to Ala94.

It belongs to the UPF0500 family.

The sequence is that of UPF0500 protein C1orf216 homolog from Mus musculus (Mouse).